Consider the following 616-residue polypeptide: Proline--tRNA ligase (616 aa).

Belongs to the class-II aminoacyl-tRNA synthetase family. ProS type 1 subfamily. Homodimer.

It is found in the cytoplasm. The enzyme catalyses tRNA(Pro) + L-proline + ATP = L-prolyl-tRNA(Pro) + AMP + diphosphate. Catalyzes the attachment of proline to tRNA(Pro) in a two-step reaction: proline is first activated by ATP to form Pro-AMP and then transferred to the acceptor end of tRNA(Pro). As ProRS can inadvertently accommodate and process non-cognate amino acids such as alanine and cysteine, to avoid such errors it has two additional distinct editing activities against alanine. One activity is designated as 'pretransfer' editing and involves the tRNA(Pro)-independent hydrolysis of activated Ala-AMP. The other activity is designated 'posttransfer' editing and involves deacylation of mischarged Ala-tRNA(Pro). The misacylated Cys-tRNA(Pro) is not edited by ProRS. In Lactococcus lactis subsp. lactis (strain IL1403) (Streptococcus lactis), this protein is Proline--tRNA ligase.